A 312-amino-acid polypeptide reads, in one-letter code: Terpene synthase 8 (312 aa).

The DDxx(x)D/E motif signature appears at 96 to 101 (DDYIYE). Positions 224–232 (NDCGSFKME) match the NDxxSxxxD/E motif motif.

The protein belongs to the terpene synthase family.

The catalysed reaction is (2E,6E)-farnesyl diphosphate + H2O = discoidol + diphosphate. It participates in sesquiterpene biosynthesis. In terms of biological role, terpene synthase; part of the gene cluster that mediates the biosynthesis of the trisnorsesquiterpene discodiene which has a function during later stages of multicellular development, during the transition from fingers to Mexican hats. The terpene synthase tps8 converts its substrate farnesyl diphosphate (FDP) into the bicyclic sesquiterpene alcohol discoidol. The cytochrome P450 monooxygenase cyp521A1 then catalyzes the oxidative degradation of discoidol to form the trisnorsesquiterpene discodiene. In Dictyostelium discoideum (Social amoeba), this protein is Terpene synthase 8.